Here is a 218-residue protein sequence, read N- to C-terminus: Glutathione S-transferase Mu 2 (218 aa).

The 87-residue stretch at 2 to 88 (PMTLGYWDIR…YLARKHNLCG (87 aa)) folds into the GST N-terminal domain. Glutathione is bound at residue 7 to 8 (YW). Residues Ser27 and Ser44 each carry the phosphoserine modification. Residues 43-46 (RSQW), Lys50, 59-60 (NL), and 72-73 (QS) each bind glutathione. The region spanning 90–208 (TEEERIRVDI…KSSRFLSKPI (119 aa)) is the GST C-terminal domain. Tyr116 provides a ligand contact to substrate. Ser117 is modified (phosphoserine).

The protein belongs to the GST superfamily. Mu family. In terms of assembly, homodimer.

Its subcellular location is the cytoplasm. The enzyme catalyses RX + glutathione = an S-substituted glutathione + a halide anion + H(+). The catalysed reaction is 11(S)-hydroxy-14(S),15(S)-epoxy-(5Z,8Z,12E)-eicosatrienoate + glutathione = (11S,15S)-dihydroxy-14(R)-S-glutathionyl-(5Z,8Z,12E)-eicosatrienoate. Conjugation of reduced glutathione to a wide number of exogenous and endogenous hydrophobic electrophiles. Participates in the formation of novel hepoxilin regioisomers. The polypeptide is Glutathione S-transferase Mu 2 (Mus musculus (Mouse)).